We begin with the raw amino-acid sequence, 533 residues long: Glucose-6-phosphate isomerase (533 aa).

Residue Glu-341 is the Proton donor of the active site. Active-site residues include His-372 and Lys-501.

Belongs to the GPI family.

The protein localises to the cytoplasm. It catalyses the reaction alpha-D-glucose 6-phosphate = beta-D-fructose 6-phosphate. Its pathway is carbohydrate biosynthesis; gluconeogenesis. It participates in carbohydrate degradation; glycolysis; D-glyceraldehyde 3-phosphate and glycerone phosphate from D-glucose: step 2/4. Functionally, catalyzes the reversible isomerization of glucose-6-phosphate to fructose-6-phosphate. The protein is Glucose-6-phosphate isomerase of Cereibacter sphaeroides (strain ATCC 17023 / DSM 158 / JCM 6121 / CCUG 31486 / LMG 2827 / NBRC 12203 / NCIMB 8253 / ATH 2.4.1.) (Rhodobacter sphaeroides).